We begin with the raw amino-acid sequence, 345 residues long: Dihydroorotate dehydrogenase (quinone) (345 aa).

FMN is bound by residues 65-69 (AGLDK) and threonine 89. Lysine 69 contributes to the substrate binding site. Residue 114 to 118 (NRMGF) coordinates substrate. 2 residues coordinate FMN: asparagine 142 and asparagine 175. Asparagine 175 serves as a coordination point for substrate. The Nucleophile role is filled by serine 178. Asparagine 180 lines the substrate pocket. FMN-binding residues include lysine 220 and threonine 248. Residue 249-250 (NT) participates in substrate binding. FMN contacts are provided by residues glycine 271, glycine 300, and 321–322 (YT).

It belongs to the dihydroorotate dehydrogenase family. Type 2 subfamily. In terms of assembly, monomer. The cofactor is FMN.

The protein localises to the cell membrane. The enzyme catalyses (S)-dihydroorotate + a quinone = orotate + a quinol. The protein operates within pyrimidine metabolism; UMP biosynthesis via de novo pathway; orotate from (S)-dihydroorotate (quinone route): step 1/1. Catalyzes the conversion of dihydroorotate to orotate with quinone as electron acceptor. The protein is Dihydroorotate dehydrogenase (quinone) of Burkholderia multivorans (strain ATCC 17616 / 249).